The chain runs to 236 residues: Aminopyrimidine aminohydrolase (236 aa).

A substrate-binding site is contributed by D44. Catalysis depends on C135, which acts as the Nucleophile. Substrate is bound by residues Y139 and Y163. E205 acts as the Proton donor in catalysis.

Belongs to the TenA family. Homotetramer.

It catalyses the reaction 4-amino-5-aminomethyl-2-methylpyrimidine + H2O = 4-amino-5-hydroxymethyl-2-methylpyrimidine + NH4(+). The enzyme catalyses thiamine + H2O = 5-(2-hydroxyethyl)-4-methylthiazole + 4-amino-5-hydroxymethyl-2-methylpyrimidine + H(+). It functions in the pathway cofactor biosynthesis; thiamine diphosphate biosynthesis. In terms of biological role, catalyzes an amino-pyrimidine hydrolysis reaction at the C5' of the pyrimidine moiety of thiamine compounds, a reaction that is part of a thiamine salvage pathway. Thus, catalyzes the conversion of 4-amino-5-aminomethyl-2-methylpyrimidine to 4-amino-5-hydroxymethyl-2-methylpyrimidine (HMP). To a lesser extent, is also able to catalyze the hydrolytic cleavage of thiamine; however, this thiaminase activity is unlikely to be physiologically relevant. Therefore, is involved in the regeneration of the thiamine pyrimidine from thiamine degraded products present in the environment, rather than in thiamine degradation. The sequence is that of Aminopyrimidine aminohydrolase from Bacillus subtilis (strain 168).